A 356-amino-acid chain; its full sequence is MSTVTITDLARENVRNLTPYQSARRLGGNGDVWLNANEYPTAVEFQLTQQTLNRYPECQPKAVIDNYAQYAGVKPEQVLVSRGADEGIELLIRAFCEPGKDAILYCPPTYGMYSVSAETIGVECRTVPTLENWQLDLQGISDKLDGVKVVYVCSPNNPTGQLINPQDFRTLLELTRGKAIVVADEAYIEFCPQASLAGWLAEYPHLAILRTLSKAFALAGLRCGFTLANEDVINLLMKVIAPYPLSTPVADIAAQALSPQGILAMRERVVQIIAEREYLIGALKEIPCVEQVFDSETNYILARFKASSAVFKSLWDQGIILRDQNKQPSLSGCLRITVGTREESQRVIDALRAEQV.

Lys-214 is modified (N6-(pyridoxal phosphate)lysine).

It belongs to the class-II pyridoxal-phosphate-dependent aminotransferase family. Histidinol-phosphate aminotransferase subfamily. As to quaternary structure, homodimer. The cofactor is pyridoxal 5'-phosphate.

It carries out the reaction L-histidinol phosphate + 2-oxoglutarate = 3-(imidazol-4-yl)-2-oxopropyl phosphate + L-glutamate. Its pathway is amino-acid biosynthesis; L-histidine biosynthesis; L-histidine from 5-phospho-alpha-D-ribose 1-diphosphate: step 7/9. This is Histidinol-phosphate aminotransferase from Escherichia fergusonii (strain ATCC 35469 / DSM 13698 / CCUG 18766 / IAM 14443 / JCM 21226 / LMG 7866 / NBRC 102419 / NCTC 12128 / CDC 0568-73).